The primary structure comprises 196 residues: MKLVATLSSPEELELAEKADVVELRIDLFDFSGARVDKEKILTCRRVSDGGKFEGDERERIEKMKRAFDSLNPDYVDLESDLPDSAFDFNCRIIESYHNFIRTPDYSELKGIVEGRRGDLVKIATMGKSKRDVETIVRILTNYDDVVAFLMGERFSFTRVLAAYLGSPFIYCYVGSPKAPGQISLDDAREIISRLG.

Residues Glu23–Arg25 and Arg45 contribute to the 3-dehydroquinate site. Residue His98 is the Proton donor/acceptor of the active site. The Schiff-base intermediate with substrate role is filled by Lys122. Residues Arg159 and Gln182 each coordinate 3-dehydroquinate.

The protein belongs to the type-I 3-dehydroquinase family. As to quaternary structure, homodimer.

It carries out the reaction 3-dehydroquinate = 3-dehydroshikimate + H2O. It functions in the pathway metabolic intermediate biosynthesis; chorismate biosynthesis; chorismate from D-erythrose 4-phosphate and phosphoenolpyruvate: step 3/7. Functionally, involved in the third step of the chorismate pathway, which leads to the biosynthesis of aromatic amino acids. Catalyzes the cis-dehydration of 3-dehydroquinate (DHQ) and introduces the first double bond of the aromatic ring to yield 3-dehydroshikimate. In Archaeoglobus fulgidus (strain ATCC 49558 / DSM 4304 / JCM 9628 / NBRC 100126 / VC-16), this protein is 3-dehydroquinate dehydratase.